A 329-amino-acid chain; its full sequence is Meiotic drive suppressor wtf21 (329 aa).

The tract at residues 1–68 is disordered; sequence MKNNYTSLKS…RENNPSRSTD (68 aa). The span at 19 to 30 shows a compositional bias: basic and acidic residues; it reads KTDHEIDLEKGP. A run of 5 helical transmembrane segments spans residues 73 to 95, 110 to 132, 165 to 182, 192 to 214, and 290 to 312; these read FLIKLLISFTPIYVLNVLAICYL, WTLFGFWCLVCTLALIFLTYFYE, IIIWILWLIICCILFVYI, ALICSTCTISAVLLLIVSSVCIP, and GIAFILGGIGNAMMGLANAIRGA.

It belongs to the WTF family. In terms of assembly, homomer. Interacts with other proteins that exhibit high sequence similarity.

The protein resides in the spore membrane. The protein localises to the vacuole membrane. In terms of biological role, acts as a suppressor component of the dual wtf meiotic drive system, and can suppress but not confer meiotic drive by compatible poisons. Wtf meiotic drive systems promote unequal transmission of alleles from the parental zygote to progeny spores by encoding a poison and an antidote from the same locus; the poison is trans-acting and forms toxic aggregates in all spores within an ascus, wherease the antidote is spore-specific and targets aggregates for degradation by the vacuole. Meiotic drive by wtf systems therefore lead to poisoning of all progeny that do not inherit the dual poison/antidote allele, or express a compatible antidote. In Schizosaccharomyces pombe (strain 972 / ATCC 24843) (Fission yeast), this protein is Meiotic drive suppressor wtf21.